The sequence spans 464 residues: Galactose-proton symporter (464 aa).

Residues 1-15 (MPDAKKQGRSNKAMT) lie on the Cytoplasmic side of the membrane. A helical transmembrane segment spans residues 16–36 (FFVCFLAALAGLLFGLDIGVI). Over 37 to 56 (AGALPFIADEFQITSHTQEW) the chain is Periplasmic. A helical transmembrane segment spans residues 57–77 (VVSSMMFGAAVGAVGSGWLSF). Residues 78-84 (KLGRKKS) are Cytoplasmic-facing. The helical transmembrane segment at 85 to 105 (LMIGAILFVAGSLFSAAAPNV) threads the bilayer. Topologically, residues 106–112 (EVLILSR) are periplasmic. The helical transmembrane segment at 113–133 (VLLGLAVGVASYTAPLYLSEI) threads the bilayer. Over 134-139 (APEKIR) the chain is Cytoplasmic. The chain crosses the membrane as a helical span at residues 140 to 160 (GSMISMYQLMITIGILGAYLS). Over 161–171 (DTAFSYTGAWR) the chain is Periplasmic. The helical transmembrane segment at 172–192 (WMLGVIIIPAILLLIGVFFLP) threads the bilayer. Topologically, residues 193–250 (DSPRWFAAKRRFVDAERVLLRLRDTSAEAKRELDEIRESLQVKQSGWALFKENSNFRR) are cytoplasmic. The chain crosses the membrane as a helical span at residues 251–271 (AVFLGVLLQVMQQFTGMNVIM). Topologically, residues 272-290 (YYAPKIFELAGYTNTTEQM) are periplasmic. A helical transmembrane segment spans residues 291 to 311 (WGTVIVGLTNVLATFIAIGLV). Residues 312 to 321 (DRWGRKPTLT) lie on the Cytoplasmic side of the membrane. A helical membrane pass occupies residues 322–342 (LGFLVMAAGMGVLGTMMHIGI). At 343–351 (HSPSAQYFA) the chain is on the periplasmic side. Residues 352–372 (IAMLLMFIVGFAMSAGPLIWV) form a helical membrane-spanning segment. Over 373–394 (LCSEIQPLKGRDFGITCSTATN) the chain is Cytoplasmic. The helical transmembrane segment at 395-415 (WIANMIVGATFLTMLNTLGNA) threads the bilayer. Residue Asn-416 is a topological domain, periplasmic. A helical membrane pass occupies residues 417–437 (TFWVYAALNVLFILLTLWLVP). At 438–464 (ETKHVSLEHIERNLMKGRKLREIGAHD) the chain is on the cytoplasmic side.

Belongs to the major facilitator superfamily. Sugar transporter (TC 2.A.1.1) family.

It localises to the cell inner membrane. In terms of biological role, uptake of galactose across the boundary membrane with the concomitant transport of protons into the cell (symport system). This chain is Galactose-proton symporter (galP), found in Escherichia coli O6:H1 (strain CFT073 / ATCC 700928 / UPEC).